A 162-amino-acid chain; its full sequence is Regulator of ribonuclease activity A (162 aa).

Belongs to the RraA family. Homotrimer. Binds to both RNA-binding sites in the C-terminal region of Rne and to RhlB.

The protein resides in the cytoplasm. Its function is as follows. Globally modulates RNA abundance by binding to RNase E (Rne) and regulating its endonucleolytic activity. Can modulate Rne action in a substrate-dependent manner by altering the composition of the degradosome. Modulates RNA-binding and helicase activities of the degradosome. The protein is Regulator of ribonuclease activity A of Haemophilus influenzae (strain 86-028NP).